The sequence spans 500 residues: MAPEPTPVDAASLTYEAVIGLEIHCQLSTQTKIFSSSSTQFGAPPNTNIDPVCLGLPGTLPVLNEKVLEYAVKAGLALNCQIAPYSKFDRKQYFYPDLPKNYQISQYDLPIAHHGYLEIELVDDKGTARRKKIGITRLHMEEDAGKLVHAGSDRLSGSAYSLVDLNRAGVPLVEIVSEPDLRTGQEAAEYAQELRRILRYLGVCDGNMQEGSLRCDVNISVRPVGSNTFGTKVEIKNMNSFSAIQRAIDYEIERQVAALKAGEPIVQETRLWDEATQETRTMRVKEGSSDYRYFPEPDLGPIEVTAEQLAAWRAELPELPAQKRRRYESEWGLPPQDARVLTDERAVAEYFEATVVAGAPPKLAANWIMGDITAYLKEQKLAIEALPLKPAELAELIQLIEAGTISGKIAKEILPELLSQGGSPKALVERKGLSQISDVATLEAMIDEVLAAHPNELEQYRAGKTKLQGFFVGQLMKKSGGRADPKLANQLLAQKLNPGS.

This sequence belongs to the GatB/GatE family. GatB subfamily. Heterotrimer of A, B and C subunits.

The catalysed reaction is L-glutamyl-tRNA(Gln) + L-glutamine + ATP + H2O = L-glutaminyl-tRNA(Gln) + L-glutamate + ADP + phosphate + H(+). It carries out the reaction L-aspartyl-tRNA(Asn) + L-glutamine + ATP + H2O = L-asparaginyl-tRNA(Asn) + L-glutamate + ADP + phosphate + 2 H(+). Its function is as follows. Allows the formation of correctly charged Asn-tRNA(Asn) or Gln-tRNA(Gln) through the transamidation of misacylated Asp-tRNA(Asn) or Glu-tRNA(Gln) in organisms which lack either or both of asparaginyl-tRNA or glutaminyl-tRNA synthetases. The reaction takes place in the presence of glutamine and ATP through an activated phospho-Asp-tRNA(Asn) or phospho-Glu-tRNA(Gln). This Thermosynechococcus vestitus (strain NIES-2133 / IAM M-273 / BP-1) protein is Aspartyl/glutamyl-tRNA(Asn/Gln) amidotransferase subunit B.